A 133-amino-acid polypeptide reads, in one-letter code: Meiotically up-regulated gene 15 protein (133 aa).

It is found in the cytoplasm. Its subcellular location is the nucleus. Has a role in meiosis. The polypeptide is Meiotically up-regulated gene 15 protein (mug15) (Schizosaccharomyces pombe (strain 972 / ATCC 24843) (Fission yeast)).